Here is a 283-residue protein sequence, read N- to C-terminus: 4-hydroxy-3-methylbut-2-enyl diphosphate reductase (283 aa).

C12 lines the [4Fe-4S] cluster pocket. Positions 40 and 73 each coordinate (2E)-4-hydroxy-3-methylbut-2-enyl diphosphate. Dimethylallyl diphosphate-binding residues include H40 and H73. Positions 40 and 73 each coordinate isopentenyl diphosphate. Residue C95 coordinates [4Fe-4S] cluster. (2E)-4-hydroxy-3-methylbut-2-enyl diphosphate is bound at residue H123. Dimethylallyl diphosphate is bound at residue H123. An isopentenyl diphosphate-binding site is contributed by H123. E125 functions as the Proton donor in the catalytic mechanism. (2E)-4-hydroxy-3-methylbut-2-enyl diphosphate is bound at residue T161. [4Fe-4S] cluster is bound at residue C189. (2E)-4-hydroxy-3-methylbut-2-enyl diphosphate-binding residues include S217, N219, and S261. S217, N219, and S261 together coordinate dimethylallyl diphosphate. Isopentenyl diphosphate contacts are provided by S217, N219, and S261.

The protein belongs to the IspH family. [4Fe-4S] cluster is required as a cofactor.

It carries out the reaction isopentenyl diphosphate + 2 oxidized [2Fe-2S]-[ferredoxin] + H2O = (2E)-4-hydroxy-3-methylbut-2-enyl diphosphate + 2 reduced [2Fe-2S]-[ferredoxin] + 2 H(+). It catalyses the reaction dimethylallyl diphosphate + 2 oxidized [2Fe-2S]-[ferredoxin] + H2O = (2E)-4-hydroxy-3-methylbut-2-enyl diphosphate + 2 reduced [2Fe-2S]-[ferredoxin] + 2 H(+). It functions in the pathway isoprenoid biosynthesis; dimethylallyl diphosphate biosynthesis; dimethylallyl diphosphate from (2E)-4-hydroxy-3-methylbutenyl diphosphate: step 1/1. Its pathway is isoprenoid biosynthesis; isopentenyl diphosphate biosynthesis via DXP pathway; isopentenyl diphosphate from 1-deoxy-D-xylulose 5-phosphate: step 6/6. In terms of biological role, catalyzes the conversion of 1-hydroxy-2-methyl-2-(E)-butenyl 4-diphosphate (HMBPP) into a mixture of isopentenyl diphosphate (IPP) and dimethylallyl diphosphate (DMAPP). Acts in the terminal step of the DOXP/MEP pathway for isoprenoid precursor biosynthesis. This chain is 4-hydroxy-3-methylbut-2-enyl diphosphate reductase, found in Citrifermentans bemidjiense (strain ATCC BAA-1014 / DSM 16622 / JCM 12645 / Bem) (Geobacter bemidjiensis).